A 620-amino-acid polypeptide reads, in one-letter code: 1-deoxy-D-xylulose-5-phosphate synthase (620 aa).

Thiamine diphosphate-binding positions include His80 and 121-123 (GHS). Asp152 serves as a coordination point for Mg(2+). Residues 153–154 (GA), Asn181, Tyr288, and Glu370 each bind thiamine diphosphate. Residue Asn181 coordinates Mg(2+).

Belongs to the transketolase family. DXPS subfamily. Homodimer. Mg(2+) is required as a cofactor. It depends on thiamine diphosphate as a cofactor.

It catalyses the reaction D-glyceraldehyde 3-phosphate + pyruvate + H(+) = 1-deoxy-D-xylulose 5-phosphate + CO2. It participates in metabolic intermediate biosynthesis; 1-deoxy-D-xylulose 5-phosphate biosynthesis; 1-deoxy-D-xylulose 5-phosphate from D-glyceraldehyde 3-phosphate and pyruvate: step 1/1. Its function is as follows. Catalyzes the acyloin condensation reaction between C atoms 2 and 3 of pyruvate and glyceraldehyde 3-phosphate to yield 1-deoxy-D-xylulose-5-phosphate (DXP). The chain is 1-deoxy-D-xylulose-5-phosphate synthase from Escherichia coli (strain K12 / MC4100 / BW2952).